A 728-amino-acid chain; its full sequence is Polyribonucleotide nucleotidyltransferase (728 aa).

Asp-503 and Asp-509 together coordinate Mg(2+). One can recognise a KH domain in the interval 570 to 629 (PRLTTIKIPSDCIGMVIGKGGETIRGITEETGAEINIADDGTVTIACTTKEGTDAALATI). The 75-residue stretch at 639 to 713 (GNIYVGKVRD…GKTKFALSIK (75 aa)) folds into the S1 motif domain.

Belongs to the polyribonucleotide nucleotidyltransferase family. Mg(2+) serves as cofactor.

It is found in the cytoplasm. The catalysed reaction is RNA(n+1) + phosphate = RNA(n) + a ribonucleoside 5'-diphosphate. Involved in mRNA degradation. Catalyzes the phosphorolysis of single-stranded polyribonucleotides processively in the 3'- to 5'-direction. In Chlorobium chlorochromatii (strain CaD3), this protein is Polyribonucleotide nucleotidyltransferase.